The following is a 760-amino-acid chain: Pentatricopeptide repeat-containing protein At1g20230 (760 aa).

PPR repeat units follow at residues 49-79 (DGYI…IPDP), 80-114 (TIYS…GLIP), 115-149 (DSHV…GLDM), 150-180 (DAFV…MSDK), 181-215 (DVVT…GIEA), 216-250 (NIVS…GFCP), 251-285 (DQVT…GLLK), 286-316 (DKCV…FEMM), 317-351 (EAGV…TMEL), 352-386 (NVVS…GVKP), 387-421 (NHVT…HLLD), 422-452 (NVHV…MPTK), 453-487 (NLVC…RLKP), 488-523 (DFIS…GIKP), and 524-554 (RLEH…MPFE). The type E motif stretch occupies residues 559-634 (VWGALLNSCR…NPGCSWIQVK (76 aa)). The tract at residues 635 to 665 (NRVYTLLAGDKSHPQIDQITEKMDEISKEMR) is type E(+) motif. The type DYW motif stretch occupies residues 666–760 (KSGHRPNLDF…DGICSCGDFW (95 aa)).

Belongs to the PPR family. PCMP-H subfamily.

The protein is Pentatricopeptide repeat-containing protein At1g20230 (PCMP-H21) of Arabidopsis thaliana (Mouse-ear cress).